A 271-amino-acid polypeptide reads, in one-letter code: Phosphatidylglycerol--prolipoprotein diacylglyceryl transferase (271 aa).

7 consecutive transmembrane segments (helical) span residues 21–41, 60–80, 95–115, 124–144, 176–196, 203–223, and 230–250; these read ISVRWYGLMYLFGFLFAMWLA, LLFAGFLGVVLGGRIGYVLFY, VWTGGMSFHGGLLGVITAMLW, FFGVADFVAPLVPFGLGVGRL, SQLYEMALEGVVLFFILNWFI, GSVSGLFLAGYGTFRFLVEYV, and LGLFGGFISMGQILSSPMIIG. Arg-143 contributes to the a 1,2-diacyl-sn-glycero-3-phospho-(1'-sn-glycerol) binding site.

Belongs to the Lgt family.

The protein localises to the cell inner membrane. It carries out the reaction L-cysteinyl-[prolipoprotein] + a 1,2-diacyl-sn-glycero-3-phospho-(1'-sn-glycerol) = an S-1,2-diacyl-sn-glyceryl-L-cysteinyl-[prolipoprotein] + sn-glycerol 1-phosphate + H(+). It participates in protein modification; lipoprotein biosynthesis (diacylglyceryl transfer). Its function is as follows. Catalyzes the transfer of the diacylglyceryl group from phosphatidylglycerol to the sulfhydryl group of the N-terminal cysteine of a prolipoprotein, the first step in the formation of mature lipoproteins. This chain is Phosphatidylglycerol--prolipoprotein diacylglyceryl transferase, found in Vibrio vulnificus (strain CMCP6).